Here is a 349-residue protein sequence, read N- to C-terminus: Ureidoglycolate dehydrogenase (NAD(+)) (349 aa).

Catalysis depends on His116, which acts as the Proton acceptor. NAD(+) is bound by residues Ser140, 174–176 (DMA), Lys224, and 306–308 (GQD).

Belongs to the LDH2/MDH2 oxidoreductase family. Homodimer.

The protein resides in the cytoplasm. The enzyme catalyses (S)-ureidoglycolate + NAD(+) = N-carbamoyl-2-oxoglycine + NADH + H(+). The protein operates within nitrogen metabolism; (S)-allantoin degradation; oxalurate from (S)-ureidoglycolate: step 1/1. Functionally, allD plays a pivotal role as a metabolic branch-point enzyme in nitrogen utilization via the assimilation of allantoin. It is able to utilize allantoin as a sole source of nitrogen under anaerobic conditions. Catalyzes the oxidation of ureidoglycolate to oxalurate. In Escherichia coli (strain K12), this protein is Ureidoglycolate dehydrogenase (NAD(+)).